Consider the following 379-residue polypeptide: Tryptophan--tRNA ligase, mitochondrial (379 aa).

ATP contacts are provided by residues Q42 and 48-51; that span reads HLGN. Residues 43–51 carry the 'HIGH' region motif; sequence PTGCFHLGN. D184 is a binding site for L-tryptophan. ATP contacts are provided by residues 196–198, V235, 244–248, and K247; these read GDD and KMSKS. Residues 244-248 carry the 'KMSKS' region motif; sequence KMSKS.

It belongs to the class-I aminoacyl-tRNA synthetase family. As to quaternary structure, homodimer.

Its subcellular location is the mitochondrion matrix. The enzyme catalyses tRNA(Trp) + L-tryptophan + ATP = L-tryptophyl-tRNA(Trp) + AMP + diphosphate + H(+). Its function is as follows. Mitochondrial aminoacyl-tRNA synthetase that catalyzes the attachment of tryptophan to tRNA(Trp). In Saccharomyces cerevisiae (strain ATCC 204508 / S288c) (Baker's yeast), this protein is Tryptophan--tRNA ligase, mitochondrial (MSW1).